Here is a 430-residue protein sequence, read N- to C-terminus: Histidinol dehydrogenase (430 aa).

The NAD(+) site is built by tyrosine 129, glutamine 190, and asparagine 213. Residues serine 236, glutamine 258, and histidine 261 each coordinate substrate. Glutamine 258 and histidine 261 together coordinate Zn(2+). Active-site proton acceptor residues include glutamate 326 and histidine 327. Residues histidine 327, aspartate 360, glutamate 414, and histidine 419 each contribute to the substrate site. Zn(2+) is bound at residue aspartate 360. Zn(2+) is bound at residue histidine 419.

The protein belongs to the histidinol dehydrogenase family. Requires Zn(2+) as cofactor.

The enzyme catalyses L-histidinol + 2 NAD(+) + H2O = L-histidine + 2 NADH + 3 H(+). It participates in amino-acid biosynthesis; L-histidine biosynthesis; L-histidine from 5-phospho-alpha-D-ribose 1-diphosphate: step 9/9. Its function is as follows. Catalyzes the sequential NAD-dependent oxidations of L-histidinol to L-histidinaldehyde and then to L-histidine. The sequence is that of Histidinol dehydrogenase from Gluconobacter oxydans (strain 621H) (Gluconobacter suboxydans).